Reading from the N-terminus, the 280-residue chain is Pantothenate synthetase (280 aa).

32-39 contributes to the ATP binding site; that stretch reads MGALHAGH. His-39 (proton donor) is an active-site residue. Gln-63 is a binding site for (R)-pantoate. Gln-63 lines the beta-alanine pocket. Residue 149–152 participates in ATP binding; sequence GEKD. Gln-155 is a (R)-pantoate binding site. Residues Val-178 and 186 to 189 contribute to the ATP site; that span reads MSSR.

This sequence belongs to the pantothenate synthetase family. Homodimer.

It is found in the cytoplasm. The catalysed reaction is (R)-pantoate + beta-alanine + ATP = (R)-pantothenate + AMP + diphosphate + H(+). The protein operates within cofactor biosynthesis; (R)-pantothenate biosynthesis; (R)-pantothenate from (R)-pantoate and beta-alanine: step 1/1. Catalyzes the condensation of pantoate with beta-alanine in an ATP-dependent reaction via a pantoyl-adenylate intermediate. The protein is Pantothenate synthetase of Ruegeria sp. (strain TM1040) (Silicibacter sp.).